We begin with the raw amino-acid sequence, 274 residues long: Thiamine kinase (274 aa).

It belongs to the thiamine kinase family.

It catalyses the reaction thiamine + ATP = thiamine phosphate + ADP + H(+). Its pathway is cofactor biosynthesis; thiamine diphosphate biosynthesis; thiamine phosphate from thiamine: step 1/1. Catalyzes the ATP-dependent phosphorylation of thiamine to thiamine phosphate. Is involved in thiamine salvage. The protein is Thiamine kinase of Salmonella dublin (strain CT_02021853).